Here is a 486-residue protein sequence, read N- to C-terminus: NADH-quinone oxidoreductase subunit N (486 aa).

The next 14 membrane-spanning stretches (helical) occupy residues 14 to 34 (SIAP…LNFI), 45 to 65 (MLAI…SGIV), 77 to 97 (FAFI…PLTL), 105 to 125 (CSLA…EFMV), 130 to 150 (LIVI…LIAL), 163 to 183 (YFTM…IFYL), 203 to 223 (ILIA…LSLI), 237 to 257 (SEVM…IVAM), 268 to 288 (IAFI…LANI), 299 to 319 (MLAF…VIGT), 326 to 346 (LFLY…VLWF), 377 to 397 (FLMA…VFWG), 409 to 429 (GFIF…YYYL), and 459 to 479 (FIIT…KFWT).

The protein belongs to the complex I subunit 2 family. As to quaternary structure, NDH-1 is composed of 14 different subunits. Subunits NuoA, H, J, K, L, M, N constitute the membrane sector of the complex.

Its subcellular location is the cell inner membrane. It carries out the reaction a quinone + NADH + 5 H(+)(in) = a quinol + NAD(+) + 4 H(+)(out). NDH-1 shuttles electrons from NADH, via FMN and iron-sulfur (Fe-S) centers, to quinones in the respiratory chain. The immediate electron acceptor for the enzyme in this species is believed to be ubiquinone. Couples the redox reaction to proton translocation (for every two electrons transferred, four hydrogen ions are translocated across the cytoplasmic membrane), and thus conserves the redox energy in a proton gradient. In Campylobacter hominis (strain ATCC BAA-381 / DSM 21671 / CCUG 45161 / LMG 19568 / NCTC 13146 / CH001A), this protein is NADH-quinone oxidoreductase subunit N.